Consider the following 1267-residue polypeptide: Ankyrin repeat and ELMO domain-containing protein D (1267 aa).

In terms of domain architecture, ELMO spans 307–466; the sequence is SHQRLLETLW…FVSGLASEVL (160 aa). The segment covering 486–496 has biased composition (basic and acidic residues); the sequence is KKKEKKSEKRG. Positions 486–598 are disordered; the sequence is KKKEKKSEKR…NNHILNNNHL (113 aa). Over residues 507 to 598 the composition is skewed to low complexity; it reads GSNGNINSTT…NNHILNNNHL (92 aa). 4 ANK repeats span residues 655 to 685, 689 to 718, 767 to 796, and 801 to 830; these read DGNS…FLNT, QGLT…DPFI, TLET…NINN, and SGQN…DPSI. Disordered regions lie at residues 854–908, 924–1040, 1057–1082, and 1103–1215; these read NPTK…NSTS, TSIN…SPIF, SPTQ…NGAE, and ENLT…PPKD. Composition is skewed to low complexity over residues 859-870, 895-908, and 924-1033; these read SRSTSSTSSSTS, ITNN…NSTS, and TSIN…STSP. Residues 1057–1080 show a composition bias toward polar residues; the sequence is SPTQESPQVISTPTSPPYLSNNNG. Composition is skewed to low complexity over residues 1108–1176 and 1184–1213; these read NSGN…IGSH and HNGP…VTPP.

The polypeptide is Ankyrin repeat and ELMO domain-containing protein D (elmoD) (Dictyostelium discoideum (Social amoeba)).